An 83-amino-acid chain; its full sequence is MAGKGVGSRLSTLFLLVLLVITIGMMQVQVAEGRMCKTPSGKFKGYCVNNTNCKNVCRTEGFPTGSCDFHVAGRKCYCYKPCP.

The N-terminal stretch at Met1–Gly33 is a signal peptide. Intrachain disulfides connect Cys36/Cys82, Cys47/Cys67, Cys53/Cys76, and Cys57/Cys78.

Belongs to the DEFL family.

The protein localises to the secreted. Its function is as follows. Plant defense peptide. Has antifungal activity against B.cinera, F.oxysporum, F.solani and H.annosum with IC(50) values of 0.4 ug/ml, 2.9 ug/ml, 0.9 ug/ml and 1.4 ug/ml, respectively. Has modest antifungal activity against C.albicans and T.reesei. Causes thickening of F.oxysporum hyphae and an increase in their branching. Lacks antibacterial activity against the Gram-negative bacteria E.coli and E.carotovora. The polypeptide is Defensin-1 (Pinus sylvestris (Scotch pine)).